The following is an 80-amino-acid chain: Exodeoxyribonuclease 7 small subunit (80 aa).

This sequence belongs to the XseB family. In terms of assembly, heterooligomer composed of large and small subunits.

Its subcellular location is the cytoplasm. The enzyme catalyses Exonucleolytic cleavage in either 5'- to 3'- or 3'- to 5'-direction to yield nucleoside 5'-phosphates.. Its function is as follows. Bidirectionally degrades single-stranded DNA into large acid-insoluble oligonucleotides, which are then degraded further into small acid-soluble oligonucleotides. The chain is Exodeoxyribonuclease 7 small subunit from Pseudomonas paraeruginosa (strain DSM 24068 / PA7) (Pseudomonas aeruginosa (strain PA7)).